Consider the following 179-residue polypeptide: ATP synthase subunit b (179 aa).

Residues 26 to 46 traverse the membrane as a helical segment; sequence FLEANLFNLAILLGIIIYYAP.

The protein belongs to the ATPase B chain family. As to quaternary structure, F-type ATPases have 2 components, F(1) - the catalytic core - and F(0) - the membrane proton channel. F(1) has five subunits: alpha(3), beta(3), gamma(1), delta(1), epsilon(1). F(0) has four main subunits: a(1), b(1), b'(1) and c(10-14). The alpha and beta chains form an alternating ring which encloses part of the gamma chain. F(1) is attached to F(0) by a central stalk formed by the gamma and epsilon chains, while a peripheral stalk is formed by the delta, b and b' chains.

The protein resides in the cellular thylakoid membrane. In terms of biological role, f(1)F(0) ATP synthase produces ATP from ADP in the presence of a proton or sodium gradient. F-type ATPases consist of two structural domains, F(1) containing the extramembraneous catalytic core and F(0) containing the membrane proton channel, linked together by a central stalk and a peripheral stalk. During catalysis, ATP synthesis in the catalytic domain of F(1) is coupled via a rotary mechanism of the central stalk subunits to proton translocation. Functionally, component of the F(0) channel, it forms part of the peripheral stalk, linking F(1) to F(0). The sequence is that of ATP synthase subunit b from Synechocystis sp. (strain ATCC 27184 / PCC 6803 / Kazusa).